The following is a 161-amino-acid chain: Phosphopantetheine adenylyltransferase (161 aa).

Ser-11 contributes to the substrate binding site. ATP contacts are provided by residues 11–12 (SF) and His-19. Substrate is bound by residues Lys-43, Leu-75, and Arg-89. ATP is bound by residues 90 to 92 (GLR), Glu-100, and 125 to 131 (YSFISSS).

It belongs to the bacterial CoaD family. In terms of assembly, homohexamer. Mg(2+) is required as a cofactor.

The protein resides in the cytoplasm. The catalysed reaction is (R)-4'-phosphopantetheine + ATP + H(+) = 3'-dephospho-CoA + diphosphate. It participates in cofactor biosynthesis; coenzyme A biosynthesis; CoA from (R)-pantothenate: step 4/5. Functionally, reversibly transfers an adenylyl group from ATP to 4'-phosphopantetheine, yielding dephospho-CoA (dPCoA) and pyrophosphate. The polypeptide is Phosphopantetheine adenylyltransferase (Staphylococcus epidermidis (strain ATCC 35984 / DSM 28319 / BCRC 17069 / CCUG 31568 / BM 3577 / RP62A)).